A 59-amino-acid polypeptide reads, in one-letter code: Large ribosomal subunit protein uL30 (59 aa).

Belongs to the universal ribosomal protein uL30 family. Part of the 50S ribosomal subunit.

This is Large ribosomal subunit protein uL30 from Erwinia tasmaniensis (strain DSM 17950 / CFBP 7177 / CIP 109463 / NCPPB 4357 / Et1/99).